A 313-amino-acid chain; its full sequence is Lactamase-like protein nscB (313 aa).

Zn(2+)-binding residues include His97, His99, Asp101, and His102. Catalysis depends on Asp101, which acts as the Proton donor/acceptor.

Belongs to the metallo-beta-lactamase superfamily. Requires Zn(2+) as cofactor.

It participates in secondary metabolite biosynthesis. Lactamase-like protein; part of the gene cluster that mediates the biosynthesis of neosartoricin B, a prenylated anthracenone that probably exhibits T-cell antiproliferative activity, suggestive of a physiological role as an immunosuppressive agent. The non-reducing polyketide synthase nscA probably synthesizes and cyclizes the decaketide backbone. The hydrolase nscB then mediates the product release through hydrolysis followed by spontaneous decarboxylation. The prenyltransferase nscD catalyzes the addition of the dimethylallyl group to the aromatic C5. The FAD-dependent monooxygenase nscC is then responsible for the stereospecific hydroxylation at C2. Neosartoricin B can be converted into two additional compounds neosartoricins C and D. Neosartoricin C is a spirocyclic compound that is cyclized through the attack of C3 hydroxyl on C14, followed by dehydration. On the other hand, neosartoricin D is a further cyclized compound in which attack of C2 on C14 in neosartoricin C results in the formation of the acetal-containing dioxabicyclo-octanone ring. Both of these compounds are novel and possibly represent related metabolites of the gene cluster. This chain is Lactamase-like protein nscB, found in Arthroderma gypseum (strain ATCC MYA-4604 / CBS 118893) (Microsporum gypseum).